The following is a 534-amino-acid chain: Ethanolamine kinase (534 aa).

A Phosphoserine modification is found at Ser-23.

Belongs to the choline/ethanolamine kinase family.

It is found in the cytoplasm. The catalysed reaction is ethanolamine + ATP = phosphoethanolamine + ADP + H(+). It carries out the reaction choline + ATP = phosphocholine + ADP + H(+). The protein operates within phospholipid metabolism; phosphatidylethanolamine biosynthesis; phosphatidylethanolamine from ethanolamine: step 1/3. Functionally, catalyzes the committed step of phosphatidylethanolamine synthesis via the CDP-ethanolamine branch of the Kennedy pathway. Also exhibits choline kinase activity, thus contributing to phosphatidylcholine synthesis via the CDP-choline pathway, but its preferred substrate is ethanolamine. In Saccharomyces cerevisiae (strain ATCC 204508 / S288c) (Baker's yeast), this protein is Ethanolamine kinase (EKI1).